A 674-amino-acid polypeptide reads, in one-letter code: Putative kinase-like protein TMKL1 (674 aa).

The first 25 residues, 1-25, serve as a signal peptide directing secretion; the sequence is MGMEALRFLHVIFFFVLILHCHCGT. The Extracellular portion of the chain corresponds to 26–295; sequence SLSGSSDVKL…PLKPCLGSSR (270 aa). N-linked (GlcNAc...) asparagine glycosylation is found at Asn57, Asn90, Asn95, and Asn110. 4 LRR repeats span residues 100–122, 124–146, 148–169, and 173–194; these read HLLSLQLPSANLTGSLPREIGEF, MLQSVFLNINSLSGSIPLELGYT, SLSDVDLSGNALAGVLPPSIWN, and KLVSFKIHGNNLSGVLPEPALP. N-linked (GlcNAc...) asparagine glycosylation is found at Asn183 and Asn195. LRR repeat units lie at residues 200–222, 224–244, and 247–269; these read NLQVLDLGGNKFSGEFPEFITRF, GVKSLDLSSNVFEGLVPEGLG, and ELESLNLSHNNFSGMLPDFGESK. Asn252 and Asn257 each carry an N-linked (GlcNAc...) asparagine glycan. The chain crosses the membrane as a helical span at residues 296-323; that stretch reads LSPGAVAGLVIGLMSGAVVVASLLIGYL. Over 324–674 the chain is Cytoplasmic; sequence QNKKRKSSIE…ETRSDAETPF (351 aa). Residues 331–350 form a disordered region; the sequence is SIESEDDLEEGDEEDEIGEK. Acidic residues predominate over residues 333–348; that stretch reads ESEDDLEEGDEEDEIG. Ser334 bears the Phosphoserine mark. The region spanning 373–674 is the Protein kinase domain; it reads NATGQVMEKT…ETRSDAETPF (302 aa). Thr375 bears the Phosphothreonine mark. Ser454 is subject to Phosphoserine. Residues 649 to 674 form a disordered region; that stretch reads LEENRPRNRSALYSPTETRSDAETPF.

The protein belongs to the protein kinase superfamily.

The protein resides in the membrane. Does not seem to have conserved a kinase activity. This Arabidopsis thaliana (Mouse-ear cress) protein is Putative kinase-like protein TMKL1 (TMKL1).